Here is a 195-residue protein sequence, read N- to C-terminus: Magnetosome membrane protein 22 (195 aa).

Over residues 1–28 the composition is skewed to low complexity; it reads MAAQTAASEAPAPAAAPADSPTTAGPTP. Positions 1 to 31 are disordered; it reads MAAQTAASEAPAPAAAPADSPTTAGPTPDSV. A run of 3 helical transmembrane segments spans residues 45 to 65, 90 to 110, and 115 to 135; these read VLAA…AAVV, SVIA…AVAV, and LIPG…AGAT.

Its subcellular location is the magnetosome membrane. In Magnetospirillum gryphiswaldense (strain DSM 6361 / JCM 21280 / NBRC 15271 / MSR-1), this protein is Magnetosome membrane protein 22.